Here is a 1121-residue protein sequence, read N- to C-terminus: Transcription factor CSR2 (1121 aa).

3 positions are modified to phosphoserine: S23, S46, and S127. 4 disordered regions span residues 273-342 (PLHT…RSLP), 513-532 (HTQLVASRPRSSSISSPQKL), 579-600 (LKRNNSNGRSDNNGASSSGLAM), and 837-860 (IPQDKNHNEVNDTNGNSNTSLQTS). The segment covering 276 to 310 (TQRTSPSNTARTGNAMDTSNSDRASPASNNNTTDA) has biased composition (polar residues). 3 stretches are compositionally biased toward low complexity: residues 318 to 329 (NNNPMNNNNSPA), 519 to 529 (SRPRSSSISSP), and 582 to 597 (NNSNGRSDNNGASSSG). S327 bears the Phosphoserine mark. Basic and acidic residues predominate over residues 837–846 (IPQDKNHNEV). K841 participates in a covalent cross-link: Glycyl lysine isopeptide (Lys-Gly) (interchain with G-Cter in ubiquitin). Positions 847-860 (NDTNGNSNTSLQTS) are enriched in polar residues. Position 987 is a phosphoserine (S987). The segment covering 999–1009 (KTTAVSDSSNG) has biased composition (polar residues). Disordered stretches follow at residues 999 to 1022 (KTTAVSDSSNGAPIRDQQEQQARP) and 1075 to 1121 (TPRY…EISS). Over residues 1084 to 1093 (TNTDYNYNDN) the composition is skewed to low complexity.

It belongs to the CSR2 family. In terms of processing, phosphorylated by CDC28.

Its subcellular location is the cytoplasm. The protein localises to the nucleus. Its function is as follows. Transcription factor involved in the regulation of fermentation and aerobic oxidation. Acts as a repressor of CYC1, which is involved in electron flow through the mitochondria under aerobic condition. Required for pseudohyphal formation upon nitrogen starvation. May be involved in viability at stationary phase and aging. The protein is Transcription factor CSR2 (CSR2) of Saccharomyces cerevisiae (strain ATCC 204508 / S288c) (Baker's yeast).